Here is a 399-residue protein sequence, read N- to C-terminus: Elongation factor Tu (399 aa).

Residues 10-204 form the tr-type G domain; the sequence is KPHVNIGTIG…SVDESIPEPE (195 aa). The G1 stretch occupies residues 19–26; that stretch reads GHVDHGKT. 19–26 lines the GTP pocket; that stretch reads GHVDHGKT. T26 lines the Mg(2+) pocket. Residues 60-64 form a G2 region; it reads GITIN. Positions 81 to 84 are G3; that stretch reads DCPG. Residues 81 to 85 and 136 to 139 contribute to the GTP site; these read DCPGH and NKCD. The segment at 136–139 is G4; sequence NKCD. Residues 174–176 are G5; it reads SAL.

It belongs to the TRAFAC class translation factor GTPase superfamily. Classic translation factor GTPase family. EF-Tu/EF-1A subfamily. Monomer.

It localises to the cytoplasm. The catalysed reaction is GTP + H2O = GDP + phosphate + H(+). Its function is as follows. GTP hydrolase that promotes the GTP-dependent binding of aminoacyl-tRNA to the A-site of ribosomes during protein biosynthesis. The chain is Elongation factor Tu from Prochlorococcus marinus (strain MIT 9211).